The primary structure comprises 608 residues: Myosin light chain kinase 2, skeletal/cardiac muscle (608 aa).

Positions 1 to 160 (MATENGAVEL…RGSPAFLHSP (160 aa)) are disordered. Ala2 bears the N-acetylalanine mark. Composition is skewed to basic and acidic residues over residues 31-43 (AAEK…DPEK) and 50-63 (TKQD…KKDA). The segment covering 82 to 91 (GSQGPAGEGG) has biased composition (gly residues). A compositionally biased stretch (basic and acidic residues) spans 116 to 127 (ASEKKPEAEKGP). Phosphoserine occurs at positions 153, 159, and 161. The tract at residues 214–235 (QKEAGEKAPGQADQAKVQGDTS) is disordered. In terms of domain architecture, Protein kinase spans 297–552 (MNSKEALGGG…AAQCLAHPWL (256 aa)). Residues 303-311 (LGGGKFGAV) and Lys326 each bind ATP. Catalysis depends on Asp418, which acts as the Proton acceptor. Residue Thr457 is modified to Phosphothreonine. Residues 586–598 (IAVSAANRFKKIS) are calmodulin-binding.

It belongs to the protein kinase superfamily. CAMK Ser/Thr protein kinase family. In terms of assembly, may interact with centrin.

The protein localises to the cytoplasm. The catalysed reaction is L-seryl-[myosin light chain] + ATP = O-phospho-L-seryl-[myosin light chain] + ADP + H(+). The enzyme catalyses L-threonyl-[myosin light chain] + ATP = O-phospho-L-threonyl-[myosin light chain] + ADP + H(+). Its function is as follows. Implicated in the level of global muscle contraction and cardiac function. Phosphorylates a specific serine in the N-terminus of a myosin light chain. This is Myosin light chain kinase 2, skeletal/cardiac muscle (MYLK2) from Oryctolagus cuniculus (Rabbit).